We begin with the raw amino-acid sequence, 530 residues long: Dual specificity calcium/calmodulin-dependent 3',5'-cyclic nucleotide phosphodiesterase 1A (530 aa).

Calmodulin-binding regions lie at residues 24–44 and 114–137; these read TEKMWQRLKGILRCLVKQLEK and EKPRFRSIVHVVQAGIFVERMYRK. Residues 142 to 508 form the PDEase domain; the sequence is VGLAYPEAVI…ERWKELAAQG (367 aa). H219 functions as the Proton donor in the catalytic mechanism. Positions 223, 259, 260, and 366 each coordinate Zn(2+). D260 serves as a coordination point for Mg(2+). 2 disordered regions span residues 450 to 471 and 502 to 530; these read TKTPSYGASRRSNMKGTTNDGT and KELAAQGEPDPHKNSDLVNAEEKHAETHS. Residues 451-471 show a composition bias toward polar residues; that stretch reads KTPSYGASRRSNMKGTTNDGT. The segment covering 510–530 has biased composition (basic and acidic residues); sequence PDPHKNSDLVNAEEKHAETHS.

It belongs to the cyclic nucleotide phosphodiesterase family. PDE1 subfamily. As to quaternary structure, homodimer. Interacts with YWHAZ. Requires Zn(2+) as cofactor. Mg(2+) serves as cofactor.

It catalyses the reaction a nucleoside 3',5'-cyclic phosphate + H2O = a nucleoside 5'-phosphate + H(+). It carries out the reaction 3',5'-cyclic GMP + H2O = GMP + H(+). The catalysed reaction is 3',5'-cyclic AMP + H2O = AMP + H(+). With respect to regulation, type I PDE are activated by the binding of calmodulin in the presence of Ca(2+). Functionally, calcium/calmodulin-dependent cyclic nucleotide phosphodiesterase with a dual specificity for the second messengers cGMP and cAMP, which are key regulators of many important physiological processes. Has a higher efficiency with cGMP compared to cAMP. The protein is Dual specificity calcium/calmodulin-dependent 3',5'-cyclic nucleotide phosphodiesterase 1A of Bos taurus (Bovine).